Here is a 352-residue protein sequence, read N- to C-terminus: Protein NDRG4 (352 aa).

Phosphoserine is present on residues serine 298, serine 317, and serine 323. The disordered stretch occupies residues 301–352 (AVPSASMTRLARSRTASLTSASSVDGSRPQPCTHSDSSEGMGQVNHTMEVSC). Residues 308-323 (TRLARSRTASLTSASS) are compositionally biased toward low complexity. Polar residues predominate over residues 330–352 (QPCTHSDSSEGMGQVNHTMEVSC).

The protein belongs to the NDRG family. Expressed in the brain and heart, weakly in the kidney; most prominently in postnatal brain where it is expressed widely in the olfactory bulb, cerebral cortex, hippocampus, cerebellum, thalamus, and medulla oblongata.

It localises to the cytoplasm. Its subcellular location is the cytosol. Contributes to the maintenance of intracerebral BDNF levels within the normal range, which is necessary for the preservation of spatial learning and the resistance to neuronal cell death caused by ischemic stress. May enhance growth factor-induced ERK1 and ERK2 phosphorylation, including that induced by NGF. May attenuate NGF-promoted ELK1 phosphorylation in a microtubule-dependent manner. This Rattus norvegicus (Rat) protein is Protein NDRG4 (Ndrg4).